A 348-amino-acid chain; its full sequence is MSQKNFVELRNVTKRFGSNTVIDNINLTIPQGQMVTLLGPSGCGKTTILRLVAGLEKPSEGQIFIDGEDVTHRSIQQRDICMVFQSYALFPHMSLGENVGYGLKMLGVSRSEVKQRVKEALAMVDLEGFEDRYVDQISGGQQQRVALARALILKPKVLLFDEPLSNLDANLRRSMRDKIRELQKQFNITSLYVTHDQSEAFAVSDTVLVMNKGHIMQIGSPQDLYRQPASRFMASFMGDANLFPANFSEEYVDIYGYRLPRAAHFPVQGSGTVGVRPEAITLSNHGEESQRCVIRHVAYMGPQYEVTVEWHGQEILLQVNATRLQPDIGEHYYLEIHPYGMFVLADAA.

In terms of domain architecture, ABC transporter spans 7–237 (VELRNVTKRF…PASRFMASFM (231 aa)). 39-46 (GPSGCGKT) lines the ATP pocket.

The protein belongs to the ABC transporter superfamily. Fe(3+) ion importer (TC 3.A.1.10) family. The complex is composed of two ATP-binding proteins (FbpC), two transmembrane proteins (FbpB) and a solute-binding protein (FbpA).

The protein resides in the cell inner membrane. The catalysed reaction is Fe(3+)(out) + ATP + H2O = Fe(3+)(in) + ADP + phosphate + H(+). Part of the ABC transporter complex FbpABC involved in Fe(3+) ions import. Responsible for energy coupling to the transport system. This is Fe(3+) ions import ATP-binding protein FbpC from Escherichia coli O157:H7.